We begin with the raw amino-acid sequence, 238 residues long: tRNA (guanine-N(1)-)-methyltransferase (238 aa).

S-adenosyl-L-methionine contacts are provided by residues glycine 109 and 129–134 (IGDFVL).

Belongs to the RNA methyltransferase TrmD family. In terms of assembly, homodimer.

It localises to the cytoplasm. It catalyses the reaction guanosine(37) in tRNA + S-adenosyl-L-methionine = N(1)-methylguanosine(37) in tRNA + S-adenosyl-L-homocysteine + H(+). Functionally, specifically methylates guanosine-37 in various tRNAs. The polypeptide is tRNA (guanine-N(1)-)-methyltransferase (Exiguobacterium sp. (strain ATCC BAA-1283 / AT1b)).